Here is a 469-residue protein sequence, read N- to C-terminus: Protein RUFY3 (469 aa).

Phosphothreonine occurs at positions 5 and 12. Phosphoserine is present on residues Ser-34 and Ser-49. Thr-51 carries the phosphothreonine modification. Positions 95–227 (DSDYAPLQQF…IDANFCMKGE (133 aa)) constitute an RUN domain. 2 coiled-coil regions span residues 271–362 (NRHL…VEKE) and 422–463 (KSEL…AANK).

As to quaternary structure, interacts with PAK1. Interacts (via C-terminus) with Ras-related Rab-5 proteins. Interacts (via C-terminus) with Ras-related Rap-2 proteins. Interacts with PIK3CA and PIK3R1. Interacts (via N-terminus) with FSCN1; this interaction induces neuron axon development. Interacts with DBN1. Interacts (via the second coiled coil) with GTP-, but not GDP-bound ARL8A and ARL8B. Interacts with dynactin/DCTN1 and the dynein intermediate chain DYNC1I1/2. Directly interacts with DYNC1LI1. Phosphorylated by PAK1.

Its subcellular location is the cytoplasm. The protein resides in the endomembrane system. The protein localises to the cell projection. It localises to the invadopodium. It is found in the growth cone. Its subcellular location is the perikaryon. The protein resides in the filopodium. The protein localises to the lamellipodium. It localises to the lysosome. ARL8 effector that promotes the coupling of endolysosomes to dynein-dynactin for retrograde transport along microtubules. Acts by binding both GTP-bound ARL8 and dynein-dynactin. In nonneuronal cells, promotes concentration of endolysosomes in the juxtanuclear area. In hippocampal neurons, drives retrograde transport of endolysosomes from the axon to the soma. Plays a role in the generation of neuronal polarity formation and axon growth. Implicated in the formation of a single axon by developing neurons. May inhibit the formation of additional axons by inhibition of PI3K in minor neuronal processes. Plays a role in the formation of F-actin-enriched protrusive structures at the cell periphery. Plays a role in cytoskeletal organization by regulating the subcellular localization of FSCN1 and DBN1 at axonal growth cones. This chain is Protein RUFY3, found in Pongo abelii (Sumatran orangutan).